The primary structure comprises 284 residues: 2-dehydro-3-deoxyphosphooctonate aldolase (284 aa).

This sequence belongs to the KdsA family.

The protein localises to the cytoplasm. The catalysed reaction is D-arabinose 5-phosphate + phosphoenolpyruvate + H2O = 3-deoxy-alpha-D-manno-2-octulosonate-8-phosphate + phosphate. Its pathway is carbohydrate biosynthesis; 3-deoxy-D-manno-octulosonate biosynthesis; 3-deoxy-D-manno-octulosonate from D-ribulose 5-phosphate: step 2/3. The protein operates within bacterial outer membrane biogenesis; lipopolysaccharide biosynthesis. In Yersinia pseudotuberculosis serotype O:1b (strain IP 31758), this protein is 2-dehydro-3-deoxyphosphooctonate aldolase.